Consider the following 154-residue polypeptide: Superoxide dismutase [Cu-Zn] (154 aa).

His47, His49, and His64 together coordinate Cu cation. Residues Cys58 and Cys147 are joined by a disulfide bond. The Zn(2+) site is built by His64, His72, His81, and Asp84. His121 serves as a coordination point for Cu cation. Residues 125–136 (DDLGKGGNEESL) show a composition bias toward basic and acidic residues. The segment at 125 to 144 (DDLGKGGNEESLKTGNAGPR) is disordered. Residue Arg144 participates in substrate binding.

The protein belongs to the Cu-Zn superoxide dismutase family. In terms of assembly, homodimer. Cu cation is required as a cofactor. Zn(2+) serves as cofactor.

Its subcellular location is the cytoplasm. The enzyme catalyses 2 superoxide + 2 H(+) = H2O2 + O2. In terms of biological role, destroys radicals which are normally produced within the cells and which are toxic to biological systems. This chain is Superoxide dismutase [Cu-Zn] (SOD1), found in Candida glabrata (strain ATCC 2001 / BCRC 20586 / JCM 3761 / NBRC 0622 / NRRL Y-65 / CBS 138) (Yeast).